Consider the following 127-residue polypeptide: Ribonuclease P protein component (127 aa).

It belongs to the RnpA family. In terms of assembly, consists of a catalytic RNA component (M1 or rnpB) and a protein subunit.

It catalyses the reaction Endonucleolytic cleavage of RNA, removing 5'-extranucleotides from tRNA precursor.. Functionally, RNaseP catalyzes the removal of the 5'-leader sequence from pre-tRNA to produce the mature 5'-terminus. It can also cleave other RNA substrates such as 4.5S RNA. The protein component plays an auxiliary but essential role in vivo by binding to the 5'-leader sequence and broadening the substrate specificity of the ribozyme. The chain is Ribonuclease P protein component from Synechococcus sp. (strain RCC307).